Consider the following 519-residue polypeptide: Probable DNA ligase (519 aa).

Glu221 contacts ATP. Catalysis depends on Lys223, which acts as the N6-AMP-lysine intermediate. Residues Arg228, Arg243, Glu272, Phe312, Arg384, and Lys390 each coordinate ATP.

This sequence belongs to the ATP-dependent DNA ligase family. The cofactor is Mg(2+).

The catalysed reaction is ATP + (deoxyribonucleotide)n-3'-hydroxyl + 5'-phospho-(deoxyribonucleotide)m = (deoxyribonucleotide)n+m + AMP + diphosphate.. DNA ligase that seals nicks in double-stranded DNA during DNA replication, DNA recombination and DNA repair. This is Probable DNA ligase from Mycolicibacterium paratuberculosis (strain ATCC BAA-968 / K-10) (Mycobacterium paratuberculosis).